Consider the following 115-residue polypeptide: Dolichyl-diphosphooligosaccharide--protein glycosyltransferase subunit DAD1 (115 aa).

Residues 1-31 (MARSTGKDAQALFHSLRSAYAATPTTLKIID) are Cytoplasmic-facing. A helical membrane pass occupies residues 32-52 (LYVGFAVFTALIQVVYMAIVG). The Lumenal portion of the chain corresponds to 53-55 (SFP). Residues 56–76 (FNSFLSGVLSCVGTAVLAVCL) form a helical membrane-spanning segment. The Cytoplasmic segment spans residues 77–94 (RIQVNKDNKEFKDLPPER). Residues 95–115 (AFADFVLCNLVLHLVIMNFLG) form a helical membrane-spanning segment.

This sequence belongs to the DAD/OST2 family. In terms of assembly, component of the oligosaccharyltransferase (OST) complex.

It is found in the endoplasmic reticulum membrane. Its pathway is protein modification; protein glycosylation. Its function is as follows. Subunit of the oligosaccharyl transferase (OST) complex that catalyzes the initial transfer of a defined glycan (Glc(3)Man(9)GlcNAc(2) in eukaryotes) from the lipid carrier dolichol-pyrophosphate to an asparagine residue within an Asn-X-Ser/Thr consensus motif in nascent polypeptide chains, the first step in protein N-glycosylation. N-glycosylation occurs cotranslationally and the complex associates with the Sec61 complex at the channel-forming translocon complex that mediates protein translocation across the endoplasmic reticulum (ER). All subunits are required for a maximal enzyme activity. The chain is Dolichyl-diphosphooligosaccharide--protein glycosyltransferase subunit DAD1 (DAD1) from Citrus unshiu (Satsuma mandarin).